Consider the following 785-residue polypeptide: MGASHLHDDPRPGSPVDHQPTTWGGIIKKWPKQTFLIVGNELCERFSFYGMRAVLTLYFFNILNFSQSFSTVLFHAFTVICYSSPLLGSILADGYIGKFWTIFFISIFYACGQILLAFSSIAPSGSSHHPLLDLLGLLIVGLGTGGIKPCVSAFGGDQFPAHYTRMISLFFSMFYFSINAGSLISMWLTPYFRSMSCFGHDSCYPLAFGIPAILMIVATLVFMAGSFWYKKVPPKENIIFKVIGTITTALRKKASSSSTHQRSHWLEYSLDGHDCALSTECKNLHGNCAQRRYIEDIKRLFRVIVMMIPVPMFWALYDQQGSTWVLQAVGMDAKVFGFEILPDQMGVLNAFLILFFIPIFQSIVYPTIEKLGFQMTMLRKMAGGGILTAVSFFVCGIVQLFVNPTLPYIPMANEAHLTIINTIPSCDFNVLIDSREPFDLLRKSGIAPDDSVRKPISFTGDDFFQPNITFDNLAPNCPKFTAEPMLAPATSYVLTLSPNGWAYNAVRPEKPKSGKGELSMGLNLIVPCDKIPSNVTWEQCNGTEGYSGAIALCKVESDVITDNNNVCDPTAKGKFYVLSNANPLDVHDFSKKSTVTAFGRTYSPIEMKPGTYRLFYTDDSRTHFTPLNLPPVQQDHMGGQYLITVSTRSKNDSEVLATTESLVSYNRVSILWQIPQYVILTAGEVLFSITGLEFAYTEASPQLKSVVQALWLFTTAIGDLIVVVIFMLNIFSDVAVQMFVFGGIMLFVIFVFILLAVFYYEYADYSNESEVLTEKMIVDDDHTRI.

The next 9 membrane-spanning stretches (helical) occupy residues 46-66, 72-92, 99-119, 134-154, 167-187, 208-228, 303-323, 345-365, and 382-402; these read FSFY…LNFS, VLFH…SILA, FWTI…LAFS, LLGL…VSAF, ISLF…ISMW, FGIP…GSFW, VIVM…QGST, MGVL…SIVY, and AGGG…QLFV. Asn-467 is a glycosylation site (N-linked (GlcNAc...) asparagine). A run of 3 helical transmembrane segments spans residues 670-690, 711-731, and 738-758; these read ILWQ…FSIT, WLFT…LNIF, and MFVF…LAVF.

It belongs to the major facilitator superfamily. Proton-dependent oligopeptide transporter (POT/PTR) (TC 2.A.17) family. As to expression, expressed in vulval, pharyngeal and anal muscles.

The protein localises to the membrane. Functionally, proton-dependent uptake of di- or tripeptides, and to a minor extent tetrapeptides. Transport is independent of sodium and chloride ions. Protein shows high affinity to peptide substrates. The chain is Peptide transporter family 2 (pept-2) from Caenorhabditis elegans.